A 413-amino-acid chain; its full sequence is High zinc activated nuclear receptor protein (413 aa).

A DNA-binding region (nuclear receptor) is located at residues 11-86; the sequence is LGNCKICLQR…EGMKIELVQL (76 aa). 2 consecutive NR C4-type zinc fingers follow at residues 14–34 and 50–69; these read CKICLQRADGIHFAVSSCRAC and CKEKGNCTVEKSLRNLCRSC. The tract at residues 101–412 is required for zinc-binding; that stretch reads SIDPLFTPNV…TSQCIVHTKN (312 aa). One can recognise an NR LBD domain in the interval 135–396; it reads QMTSGYAMFL…VCCKNFKEDA (262 aa).

Belongs to the nuclear hormone receptor family. Weakly expressed in intestinal cells in the absence of zinc supplementation. Upon zinc supplementation, accumulates in alimentary tract cells, and it is mainly expressed in the intestine.

It localises to the nucleus. The protein resides in the cytoplasm. Nuclear receptor transcription factor that binds to DNA enhancer elements to promote the transcription of genes required to maintain micronutrient homeostasis. Direct binding to its ligand zinc allows for nuclear accumulation and activation, which thereby induces the transcription of genes required to promote the storage and detoxification of excess dietary zinc. This in turn, allows for internal zinc levels to be detected and regulated. This is High zinc activated nuclear receptor protein from Caenorhabditis elegans.